A 356-amino-acid chain; its full sequence is UDP-N-acetylglucosamine--N-acetylmuramyl-(pentapeptide) pyrophosphoryl-undecaprenol N-acetylglucosamine transferase (356 aa).

UDP-N-acetyl-alpha-D-glucosamine contacts are provided by residues 12 to 14, N124, R163, S188, I242, 261 to 266, and Q287; these read TGG and ALTVCE.

Belongs to the glycosyltransferase 28 family. MurG subfamily.

It localises to the cell inner membrane. It carries out the reaction di-trans,octa-cis-undecaprenyl diphospho-N-acetyl-alpha-D-muramoyl-L-alanyl-D-glutamyl-meso-2,6-diaminopimeloyl-D-alanyl-D-alanine + UDP-N-acetyl-alpha-D-glucosamine = di-trans,octa-cis-undecaprenyl diphospho-[N-acetyl-alpha-D-glucosaminyl-(1-&gt;4)]-N-acetyl-alpha-D-muramoyl-L-alanyl-D-glutamyl-meso-2,6-diaminopimeloyl-D-alanyl-D-alanine + UDP + H(+). It participates in cell wall biogenesis; peptidoglycan biosynthesis. Cell wall formation. Catalyzes the transfer of a GlcNAc subunit on undecaprenyl-pyrophosphoryl-MurNAc-pentapeptide (lipid intermediate I) to form undecaprenyl-pyrophosphoryl-MurNAc-(pentapeptide)GlcNAc (lipid intermediate II). This Stutzerimonas stutzeri (strain A1501) (Pseudomonas stutzeri) protein is UDP-N-acetylglucosamine--N-acetylmuramyl-(pentapeptide) pyrophosphoryl-undecaprenol N-acetylglucosamine transferase.